The sequence spans 947 residues: MEEEEVVVVVDEEESERRRQKMIEEEKKRLDEEMELRRRRVKEWQEQKRLEEEEAKRREQEAAAGAGTPAAAAGADGDSNAGKKWTLDGEESDEEGYKEDSQNAEDDGGITADLPSEVNDANVAAPMEEDEIDPLDAFMSSMVLPEVAKLETAVASMESMPASNMGDKNGKSAKDAVSNGDKKGQKKAMGRIMQGDDSDSDYDDDDDDEGGSKDEDDEEFMKRVKKTKVEKLAIVDHSKIEYQPFRKNLYIEVKDITMMTGEEVATYRKNLELKVHGKDVPKPIKTWVQSGLTSKLLDTIKKLGFEKPMPIQAQALPIIMSGRDCIGIAKTGSGKTLAFVLPMLRHVKDQPPVVPGDGPIGLIMAPTRELVVQIHSDIKKFAKSLGINCVAIYGGSGVAQQISELKRGAEIVVCTPGRMIDILCTSSGKITNLRRVTFLVMDEADRMFDMGFEPQITRIVQNTRPDRQTVLFSAIFPRQVEILARKVLTKPVEIQVGGRSVVNKDITQLVEVRPENERFLRLLELLGEWFDRGKILVFVHSQDKCDSLLKDLFQRGYPCLSLHGGKDQTDRESTLADFKSNLELVVNYDVPNHYEDYVHRVGRTGHAGRKGFAVTFISDEEERYAPDLAKALELSEQAVPQDLKGLADRFMAKVKQGTEQAHGTGYGGSGFKFNEEEDEARRSAKKAQAREYGYEEDKSDSDSDEEGGVRKAGGDLAAQAIAAAQAAATLAAAKAASNANQQVQSTNAGSLLSIPVVANAPNNEATARALQAALNIQQNLARIQAHVVPEHYEVELDINDFPQNARWKITHKETLGPIQDWTEAAITTRGTFIPQGKIVGANERKLYLFIEGPTELSVKKAKSELKRVLEDCANHALNLPGSAQTGKTANSEMQGFLVKVFLGRWTAILVFLDDGVICNIRAEKLDKWQVRVFYVKVADPLGYSITE.

Residues 1-14 (MEEEEVVVVVDEEE) show a composition bias toward acidic residues. 2 disordered regions span residues 1–132 (MEEE…EDEI) and 159–221 (SMPA…EEFM). Basic and acidic residues-rich tracts occupy residues 15-31 (SERR…KRLD) and 42-61 (KEWQ…REQE). The span at 62-82 (AAAGAGTPAAAAGADGDSNAG) shows a compositional bias: low complexity. Composition is skewed to acidic residues over residues 88-108 (DGEE…EDDG) and 196-219 (DDSD…DDEE). Positions 285 to 313 (KTWVQSGLTSKLLDTIKKLGFEKPMPIQA) match the Q motif motif. Residues 316–494 (LPIIMSGRDC…RKVLTKPVEI (179 aa)) form the Helicase ATP-binding domain. 329–336 (AKTGSGKT) serves as a coordination point for ATP. Positions 442-445 (DEAD) match the DEAD box motif. One can recognise a Helicase C-terminal domain in the interval 479–647 (QVEILARKVL…AVPQDLKGLA (169 aa)). A disordered region spans residues 658-710 (TEQAHGTGYGGSGFKFNEEEDEARRSAKKAQAREYGYEEDKSDSDSDEEGGVR). The segment covering 697–706 (DKSDSDSDEE) has biased composition (acidic residues). Residues 854-879 (TELSVKKAKSELKRVLEDCANHALNL) are a coiled coil.

This sequence belongs to the DEAD box helicase family. DDX46/PRP5 subfamily.

It catalyses the reaction ATP + H2O = ADP + phosphate + H(+). This Oryza sativa subsp. japonica (Rice) protein is DEAD-box ATP-dependent RNA helicase 45.